The chain runs to 146 residues: D-aminoacyl-tRNA deacylase (146 aa).

A Gly-cisPro motif, important for rejection of L-amino acids motif is present at residues 137–138 (GP).

It belongs to the DTD family. As to quaternary structure, homodimer.

The protein resides in the cytoplasm. It catalyses the reaction glycyl-tRNA(Ala) + H2O = tRNA(Ala) + glycine + H(+). The enzyme catalyses a D-aminoacyl-tRNA + H2O = a tRNA + a D-alpha-amino acid + H(+). An aminoacyl-tRNA editing enzyme that deacylates mischarged D-aminoacyl-tRNAs. Also deacylates mischarged glycyl-tRNA(Ala), protecting cells against glycine mischarging by AlaRS. Acts via tRNA-based rather than protein-based catalysis; rejects L-amino acids rather than detecting D-amino acids in the active site. By recycling D-aminoacyl-tRNA to D-amino acids and free tRNA molecules, this enzyme counteracts the toxicity associated with the formation of D-aminoacyl-tRNA entities in vivo and helps enforce protein L-homochirality. The chain is D-aminoacyl-tRNA deacylase from Shouchella clausii (strain KSM-K16) (Alkalihalobacillus clausii).